Consider the following 435-residue polypeptide: MTSPLKRTLTRELPQHEGQTVKLQGFVHARRDLGGVQFLVLRDVTGVTQCVGSGLTLPLAESSVEVVGKVKAHPKAPGGFEVQVEDFRVISAATEATPVEIPKMEWNVNPETMLDYRVVTVRGLKERAALKVQAELVDAFRAHLRGEGFTEISTPKIVSAGAEGGANLFPIDYFGHPAYLAQSPQLYKQIMVGVFERVFEVAAVYRAEEHATSRHLNEYLSLDVEMGFIEDEEDVMGLENRLLASIMERLRATSQAEFELLGATIPDVPAHIPRITLMDARQLVTEKYGHPVGGKDLDPEAERLLSQHFAETEGSDFVFVTKYPRAARPFYAHPELNEDGSVNGEVTRGFDLLFRGIEITSGGQRIHDYGMLMDSIAAYKLKPESLEGYTEVFKYGMPPHGGFAIGAERLTAKLLGIANVRYARAFPRDRHRLTP.

E163 serves as a coordination point for L-aspartate. An aspartate region spans residues 185-188 (QLYK). L-aspartate is bound at residue R206. Residues 206 to 208 (RAE), 214 to 216 (RHL), and E358 contribute to the ATP site. L-aspartate-binding residues include S361 and R365. ATP is bound at residue 406–409 (GAER).

Belongs to the class-II aminoacyl-tRNA synthetase family. Type 2 subfamily. As to quaternary structure, homodimer.

Its subcellular location is the cytoplasm. It carries out the reaction tRNA(Asx) + L-aspartate + ATP = L-aspartyl-tRNA(Asx) + AMP + diphosphate. Aspartyl-tRNA synthetase with relaxed tRNA specificity since it is able to aspartylate not only its cognate tRNA(Asp) but also tRNA(Asn). Reaction proceeds in two steps: L-aspartate is first activated by ATP to form Asp-AMP and then transferred to the acceptor end of tRNA(Asp/Asn). Is slightly more efficient at aminoacylating tRNA(Asn) over tRNA(Asp). The chain is Aspartate--tRNA(Asp/Asn) ligase (aspS2) from Deinococcus radiodurans (strain ATCC 13939 / DSM 20539 / JCM 16871 / CCUG 27074 / LMG 4051 / NBRC 15346 / NCIMB 9279 / VKM B-1422 / R1).